We begin with the raw amino-acid sequence, 245 residues long: Glutathione S-transferase T1 (245 aa).

Positions Met-2–Ala-83 constitute a GST N-terminal domain. Residues Ser-12–Gln-13, Gln-41–Leu-42, Lys-54–Val-55, and Glu-67–Ser-68 each bind glutathione. The GST C-terminal domain occupies Asp-90–Met-233. The Microbody targeting signal motif lies at Ser-243–Ile-245.

It belongs to the GST superfamily. Theta family.

Its subcellular location is the nucleus. It localises to the peroxisome. The catalysed reaction is RX + glutathione = an S-substituted glutathione + a halide anion + H(+). Functionally, in vitro, possesses glutathione S-transferase activity toward 1-chloro-2,4-dinitrobenzene (CDNB) and p-nitrobenzyl chloride (pNBC), and glutathione peroxidase activity toward cumene hydroperoxide and linoleic acid-13-hydroperoxide. May be involved in the conjugation of reduced glutathione to a wide number of exogenous and endogenous hydrophobic electrophiles and have a detoxification role against certain herbicides. The protein is Glutathione S-transferase T1 (GSTT1) of Arabidopsis thaliana (Mouse-ear cress).